Here is a 753-residue protein sequence, read N- to C-terminus: 5-methyltetrahydropteroyltriglutamate--homocysteine methyltransferase (753 aa).

5-methyltetrahydropteroyltri-L-glutamate is bound by residues 17–20 and Lys117; that span reads RELK. L-homocysteine contacts are provided by residues 431 to 433 and Glu484; that span reads IGS. L-methionine-binding positions include 431 to 433 and Glu484; that span reads IGS. Residues 515–516 and Trp561 contribute to the 5-methyltetrahydropteroyltri-L-glutamate site; that span reads RC. Residue Asp599 participates in L-homocysteine binding. Asp599 lines the L-methionine pocket. Glu605 is a 5-methyltetrahydropteroyltri-L-glutamate binding site. Positions 641, 643, and 665 each coordinate Zn(2+). The active-site Proton donor is the His694. Cys726 is a Zn(2+) binding site.

It belongs to the vitamin-B12 independent methionine synthase family. Requires Zn(2+) as cofactor.

It catalyses the reaction 5-methyltetrahydropteroyltri-L-glutamate + L-homocysteine = tetrahydropteroyltri-L-glutamate + L-methionine. It participates in amino-acid biosynthesis; L-methionine biosynthesis via de novo pathway; L-methionine from L-homocysteine (MetE route): step 1/1. Functionally, catalyzes the transfer of a methyl group from 5-methyltetrahydrofolate to homocysteine resulting in methionine formation. In Escherichia coli O6:K15:H31 (strain 536 / UPEC), this protein is 5-methyltetrahydropteroyltriglutamate--homocysteine methyltransferase.